The chain runs to 936 residues: Pre-rRNA-processing protein FHL1 (936 aa).

Disordered regions lie at residues 1 to 90 (MDGE…NGNL) and 139 to 169 (DHSREVSSKEDINIEPVNPDEDEREKTQDNT). Residues 9–29 (ESSNHVGTSSPTTETQFTIDS) are compositionally biased toward polar residues. Ser-44 is modified (phosphoserine). Positions 139–150 (DHSREVSSKEDI) are enriched in basic and acidic residues. A Phosphoserine modification is found at Ser-228. Thr-230 and Thr-247 each carry phosphothreonine. The segment covering 243 to 257 (PPQNTVTENNSTDAE) has biased composition (polar residues). Residues 243–270 (PPQNTVTENNSTDAETTQRKLSEPIDAS) form a disordered region. Ser-264 carries the phosphoserine modification. The FHA domain maps to 300–357 (AIIGRRSENDFSHKVDVNLGPSKSISRRHAQIFYNFGTGRFELSIIGKNGAFVDDIFV). Positions 384-395 (EQERNDDSKSPE) are enriched in basic and acidic residues. The tract at residues 384-442 (EQERNDDSKSPENADIAESEINTRNLKKNEPKSKKKITTGAKPKKAQTKPAVKKEKKPP) is disordered. Over residues 416 to 430 (SKKKITTGAKPKKAQ) the composition is skewed to basic residues. A DNA-binding region (fork-head) is located at residues 460–552 (TKPTVSYSAM…ERQKKKQSEI (93 aa)). Positions 718–936 (AKAQHSKPIR…EVNVSLEEKL (219 aa)) are disordered. Composition is skewed to polar residues over residues 742 to 753 (SQLSASASSHPN) and 765 to 777 (DPSSLSRFFQPRQ). Composition is skewed to low complexity over residues 779–795 (ARATSSVAATSVPAAAS) and 815–853 (ESGTSSSSSSSSESGSESDSGSDDGSASGSGDNSSTSSE). Residues 854–863 (SESESDSGSE) are compositionally biased toward acidic residues. The segment covering 864–911 (VDEKNNKNEKIDSESIKNNESKDDIPSKDENSSNDNREISKTDEEGHD) has biased composition (basic and acidic residues).

The protein resides in the nucleus. In terms of biological role, acts as a transcriptional regulator that recruits coactivator IFH1 to the promoters of ribosomal protein genes. Recruited to ribosomal gene promoters by RAP1. The sequence is that of Pre-rRNA-processing protein FHL1 (FHL1) from Saccharomyces cerevisiae (strain ATCC 204508 / S288c) (Baker's yeast).